Consider the following 768-residue polypeptide: DNA ligase (768 aa).

NAD(+)-binding positions include D30–D34, S79–L80, and E190. K192 serves as the catalytic N6-AMP-lysine intermediate. Residues R213, E250, K367, and K391 each contribute to the NAD(+) site. The Zn(2+) site is built by C485, C488, C503, and C509. A BRCT domain is found at A678 to Q767.

This sequence belongs to the NAD-dependent DNA ligase family. LigA subfamily. The cofactor is Mg(2+). It depends on Mn(2+) as a cofactor.

It carries out the reaction NAD(+) + (deoxyribonucleotide)n-3'-hydroxyl + 5'-phospho-(deoxyribonucleotide)m = (deoxyribonucleotide)n+m + AMP + beta-nicotinamide D-nucleotide.. DNA ligase that catalyzes the formation of phosphodiester linkages between 5'-phosphoryl and 3'-hydroxyl groups in double-stranded DNA using NAD as a coenzyme and as the energy source for the reaction. It is essential for DNA replication and repair of damaged DNA. The sequence is that of DNA ligase from Magnetococcus marinus (strain ATCC BAA-1437 / JCM 17883 / MC-1).